A 443-amino-acid polypeptide reads, in one-letter code: Threonine/serine transporter TdcC (443 aa).

Transmembrane regions (helical) follow at residues 22 to 42 (TTWT…FFPI), 44 to 64 (AGFG…PIAF), 97 to 117 (GVVI…IYGV), 140 to 160 (FVAL…KDLM), 163 to 183 (VMSY…LSLI), 207 to 227 (ILIT…FSPI), 261 to 281 (MLMV…LSPA), 311 to 331 (FAIT…FKSF), 366 to 386 (ISMI…PNIL), 389 to 409 (IEAM…MYAI), and 423 to 443 (DNVF…YKLF).

Belongs to the amino acid/polyamine transporter 2 family. SdaC/TdcC subfamily.

The protein resides in the cell inner membrane. The enzyme catalyses L-threonine(in) + H(+)(in) = L-threonine(out) + H(+)(out). It catalyses the reaction L-serine(in) + H(+)(in) = L-serine(out) + H(+)(out). Its function is as follows. Involved in the import of threonine and serine into the cell, with the concomitant import of a proton (symport system). In Shigella sonnei (strain Ss046), this protein is Threonine/serine transporter TdcC.